The sequence spans 325 residues: Metacaspase-9 (325 aa).

Residues His-95 and Cys-147 contribute to the active site. Cys-147 carries the post-translational modification S-nitrosocysteine. A glycan (N-linked (GlcNAc...) asparagine) is linked at Asn-177.

It belongs to the peptidase C14B family. The two subunits are derived from the precursor sequence by an autocatalytic mechanism. Post-translationally, S-nitrosylation at Cys-147 suppresses both autoprocessing and proteolytic activity of the full-length protein, but does not affect the activity of the mature processed form. Expressed in root tips, cauline leaves, flowers and siliques.

It is found in the secreted. Its subcellular location is the extracellular space. It localises to the apoplast. Inhibited by serpin ZX and nitric oxide through cysteine nitrosylation. Its function is as follows. Cysteine protease that cleaves specifically after arginine or lysine residues. Does not cleave caspase-specific substrates. Required for proteolytic processing of GRI. This is Metacaspase-9 (AMC9) from Arabidopsis thaliana (Mouse-ear cress).